Consider the following 187-residue polypeptide: Ribosome maturation factor RimM (187 aa).

One can recognise a PRC barrel domain in the interval 111–187 (KDEYYWVDLI…RILVDWQADF (77 aa)).

It belongs to the RimM family. As to quaternary structure, binds ribosomal protein uS19.

It localises to the cytoplasm. In terms of biological role, an accessory protein needed during the final step in the assembly of 30S ribosomal subunit, possibly for assembly of the head region. Essential for efficient processing of 16S rRNA. May be needed both before and after RbfA during the maturation of 16S rRNA. It has affinity for free ribosomal 30S subunits but not for 70S ribosomes. The chain is Ribosome maturation factor RimM from Albidiferax ferrireducens (strain ATCC BAA-621 / DSM 15236 / T118) (Rhodoferax ferrireducens).